A 45-amino-acid polypeptide reads, in one-letter code: Caltrin-like protein 1 (45 aa).

The 38-residue stretch at 8–45 folds into the Kazal-like domain; it reads DSDRPNCSRYVQHLYMCTKELDPVCGTDGHTYGNRSIF. N-linked (GlcNAc...) asparagine glycans are attached at residues N13 and N41.

In terms of processing, glycosylated.

The protein resides in the secreted. Its function is as follows. Inhibits calcium transport into spermatozoa. The polypeptide is Caltrin-like protein 1 (Cavia porcellus (Guinea pig)).